The chain runs to 432 residues: D-amino acid dehydrogenase (432 aa).

Position 3-17 (3-17) interacts with FAD; that stretch reads VVVLGSGVVGVTSAW.

It belongs to the DadA oxidoreductase family. FAD serves as cofactor.

It carries out the reaction a D-alpha-amino acid + A + H2O = a 2-oxocarboxylate + AH2 + NH4(+). It functions in the pathway amino-acid degradation; D-alanine degradation; NH(3) and pyruvate from D-alanine: step 1/1. Functionally, oxidative deamination of D-amino acids. This chain is D-amino acid dehydrogenase, found in Enterobacter sp. (strain 638).